A 108-amino-acid chain; its full sequence is uncharacterized protein (108 aa).

The disordered stretch occupies residues 81 to 108; it reads FKCLDSPPPVPPSSSQGEDEENTVDSQY. Residues 97–108 are compositionally biased toward acidic residues; it reads GEDEENTVDSQY.

This is an uncharacterized protein from Saccharomyces cerevisiae (strain ATCC 204508 / S288c) (Baker's yeast).